The primary structure comprises 633 residues: Heterogeneous nuclear ribonucleoprotein R (633 aa).

The tract at residues 1-24 (MANQVNGNAVQLKEEEEPMDTSSV) is disordered. Ala-2 is modified (N-acetylalanine). Glycyl lysine isopeptide (Lys-Gly) (interchain with G-Cter in SUMO2) cross-links involve residues Lys-13 and Lys-171. RRM domains follow at residues 165-244 (TEVF…ISVA), 246-328 (NRLF…WADP), and 341-411 (KVLF…LAKP). Lys-359 is covalently cross-linked (Glycyl lysine isopeptide (Lys-Gly) (interchain with G-Cter in SUMO2)). Residue Lys-366 is modified to N6-acetyllysine. Positions 412 to 418 (PDKKRKE) match the Nuclear localization signal motif. The tract at residues 412–456 (PDKKRKERQAARQASRSTAYEDYYYHPPPRMPPPIRGRGRGGGRG) is disordered. Positions 437–446 (HPPPRMPPPI) are enriched in pro residues. The RNA-binding RGG-box stretch occupies residues 447 to 567 (RGRGRGGGRG…SRGSRGNRGG (121 aa)). A 1; approximate repeat occupies 462 to 471 (PDYYGYEDYY). Residues 462–497 (PDYYGYEDYYDDYYGYDYHDYRGGYEDPYYGYDDGY) are 3 X 11 AA approximate repeats of D-D-Y-Y-G-Y-D-Y-H-D-Y. Repeat unit 2 spans residues 472–482 (DDYYGYDYHDY). Residues 488 to 497 (DPYYGYDDGY) form a 3; approximate repeat. Over residues 501-510 (GRGGGRGGRG) the composition is skewed to gly residues. Positions 501-633 (GRGGGRGGRG…YQDTYGQQWK (133 aa)) are disordered. A compositionally biased stretch (pro residues) spans 511 to 524 (APPPPRGRGAPPPR). Residues 525–541 (GRAGYSQRGAPLGPPRG) are compositionally biased toward low complexity. The span at 558–570 (SRGSRGNRGGNVG) shows a compositional bias: gly residues. Residues 588-604 (TNNQQNWGSQPIAQQPL) show a composition bias toward polar residues. Residues 605 to 621 (QQGGDYSGNYGYNNDNQ) show a composition bias toward low complexity. Residues 622–633 (EFYQDTYGQQWK) show a composition bias toward polar residues.

As to quaternary structure, identified in the spliceosome C complex. Identified in a IGF2BP1-dependent mRNP granule complex containing untranslated mRNAs. Interacts with GTPBP1.

It localises to the nucleus. It is found in the microsome. Its subcellular location is the nucleoplasm. The protein resides in the cytoplasm. In terms of biological role, component of ribonucleosomes, which are complexes of at least 20 other different heterogeneous nuclear ribonucleoproteins (hnRNP). hnRNP play an important role in processing of precursor mRNA in the nucleus. The chain is Heterogeneous nuclear ribonucleoprotein R (HNRNPR) from Homo sapiens (Human).